We begin with the raw amino-acid sequence, 231 residues long: Ribonuclease HI (231 aa).

One can recognise an RNase H type-1 domain in the interval Met-1–Val-146. The Mg(2+) site is built by Asp-10, Glu-50, Asp-72, and Asp-138. Low complexity-rich tracts occupy residues Gln-148 to Ser-157 and Val-166 to Ala-181. 2 disordered regions span residues Gln-148–Thr-192 and Pro-212–Gly-231.

The protein belongs to the RNase H family. In terms of assembly, monomer. Requires Mg(2+) as cofactor.

It is found in the cytoplasm. The enzyme catalyses Endonucleolytic cleavage to 5'-phosphomonoester.. Functionally, endonuclease that specifically degrades the RNA of RNA-DNA hybrids. This chain is Ribonuclease HI (rnhA), found in Streptomyces coelicolor (strain ATCC BAA-471 / A3(2) / M145).